Reading from the N-terminus, the 476-residue chain is Bifunctional protein HldE (476 aa).

The segment at 1–318 (MKVTLPEFER…ENAVRGRADT (318 aa)) is ribokinase. 195–198 (NLSE) contacts ATP. Aspartate 264 is an active-site residue. A cytidylyltransferase region spans residues 344–476 (MTNGVFDILH…IIKKIQKDSQ (133 aa)).

This sequence in the N-terminal section; belongs to the carbohydrate kinase PfkB family. It in the C-terminal section; belongs to the cytidylyltransferase family. As to quaternary structure, homodimer.

The enzyme catalyses D-glycero-beta-D-manno-heptose 7-phosphate + ATP = D-glycero-beta-D-manno-heptose 1,7-bisphosphate + ADP + H(+). It catalyses the reaction D-glycero-beta-D-manno-heptose 1-phosphate + ATP + H(+) = ADP-D-glycero-beta-D-manno-heptose + diphosphate. It functions in the pathway nucleotide-sugar biosynthesis; ADP-L-glycero-beta-D-manno-heptose biosynthesis; ADP-L-glycero-beta-D-manno-heptose from D-glycero-beta-D-manno-heptose 7-phosphate: step 1/4. Its pathway is nucleotide-sugar biosynthesis; ADP-L-glycero-beta-D-manno-heptose biosynthesis; ADP-L-glycero-beta-D-manno-heptose from D-glycero-beta-D-manno-heptose 7-phosphate: step 3/4. Functionally, catalyzes the phosphorylation of D-glycero-D-manno-heptose 7-phosphate at the C-1 position to selectively form D-glycero-beta-D-manno-heptose-1,7-bisphosphate. In terms of biological role, catalyzes the ADP transfer from ATP to D-glycero-beta-D-manno-heptose 1-phosphate, yielding ADP-D-glycero-beta-D-manno-heptose. The polypeptide is Bifunctional protein HldE (Enterobacter sp. (strain 638)).